The sequence spans 247 residues: MMNESQPKLKYKRILLKFSGEALMGKSQFGIDPSVLDSLARDIAELIHMGVEVGLVLGGGNLFRGKALSQAGVGRVTGDHMGMLATVMNALALRDALERIDLPARIMSAIPMLGVVDPYHRRKAITHLRNGQVVIFAAGTGNPFFTTDTAACLRAIEIGADIVLKATKVDGVYSADPLKNPDAKRYDYLTYKEVLTKGLEVMDSTAICLCQDQGMPLQVFDMAAPKALKRIVTGERVGTIVGANHDQ.

17 to 20 (KFSG) serves as a coordination point for ATP. UMP is bound at residue G59. Residues G60 and R64 each contribute to the ATP site. UMP contacts are provided by residues D79 and 140–147 (TGNPFFTT). Residues T167, Y173, and D176 each contribute to the ATP site.

This sequence belongs to the UMP kinase family. Homohexamer.

It is found in the cytoplasm. The enzyme catalyses UMP + ATP = UDP + ADP. The protein operates within pyrimidine metabolism; CTP biosynthesis via de novo pathway; UDP from UMP (UMPK route): step 1/1. Its activity is regulated as follows. Inhibited by UTP. Catalyzes the reversible phosphorylation of UMP to UDP. The chain is Uridylate kinase from Legionella pneumophila (strain Lens).